A 343-amino-acid polypeptide reads, in one-letter code: Envelope glycoprotein K (343 aa).

Positions 1–31 (MLLGGRTAYLSVLGLITAYAAFTIWYTLTAQ) are cleaved as a signal peptide. Topologically, residues 32 to 118 (LHNPCVYATV…VVGTRNCRAY (87 aa)) are extracellular. N-linked (GlcNAc...) asparagine; by host glycosylation is found at asparagine 57 and asparagine 89. Residues 119 to 139 (LWSVQLQMITGAWLIYIAFLC) traverse the membrane as a helical segment. Topologically, residues 140-213 (LRQERRLLGP…DPIGFLCEHS (74 aa)) are cytoplasmic. A helical membrane pass occupies residues 214 to 234 (AALALIGLEVGTHFVARLLVV). Over 235–251 (GTVTLVHTPCSQIYPIY) the chain is Extracellular. A helical membrane pass occupies residues 252-272 (LKLASWGFVVAVTIVEIVAII). Residues 273 to 303 (YEKPPKTGSSANPPTPATHGVKGLCTSCCST) lie on the Cytoplasmic side of the membrane. Residues 304–324 (VLANLCGKLVYLLLVIGAVSI) traverse the membrane as a helical segment. Topologically, residues 325–343 (LLHYEQRIQIGLLGESFSS) are extracellular.

This sequence belongs to the alphaherpesvirinae glycoprotein K family. In terms of assembly, interacts (via UL20 interaction region) with protein UL20 homolog (via N-terminus); this interaction probably plays a role in the coordinate transport of protein UL20 homolog and gK to the trans-Golgi network (TGN), and is required for the cell surface expression of gK. Post-translationally, N-glycosylated.

Its subcellular location is the host cell membrane. The protein resides in the host endosome membrane. It is found in the host Golgi apparatus membrane. Its function is as follows. Glycoprotein that probably modulates membrane fusion events during secondary envelopment of cytoplasmic capsids that bud into specific trans-Golgi network (TGN)-derived membranes. This Equine herpesvirus 1 (strain Ab4p) (EHV-1) protein is Envelope glycoprotein K (gK).